Consider the following 520-residue polypeptide: Amine oxidase [flavin-containing] B (520 aa).

S2 is subject to N-acetylserine. At 2–489 (SSKCDVVVVG…TFLQRHLPSV (488 aa)) the chain is on the cytoplasmic side. At K52 the chain carries N6-acetyllysine. At C397 the chain carries S-8alpha-FAD cysteine. A helical; Anchor for type IV membrane protein membrane pass occupies residues 490–516 (PGLLKLIGLTTIFSATALGFLAHKRGL). Topologically, residues 517-520 (LVRI) are mitochondrial intermembrane.

Monomer, homo- or heterodimer (containing two subunits of similar size). Each subunit contains a covalently bound flavin. Enzymatically active as monomer. The cofactor is FAD.

It is found in the mitochondrion outer membrane. It carries out the reaction a secondary aliphatic amine + O2 + H2O = a primary amine + an aldehyde + H2O2. The enzyme catalyses a primary methyl amine + O2 + H2O = an aldehyde + H2O2 + NH4(+). The catalysed reaction is benzylamine + O2 + H2O = benzaldehyde + H2O2 + NH4(+). It catalyses the reaction (R)-adrenaline + O2 + H2O = (R)-3,4-dihydroxymandelaldehyde + methylamine + H2O2. It carries out the reaction dopamine + O2 + H2O = 3,4-dihydroxyphenylacetaldehyde + H2O2 + NH4(+). The enzyme catalyses tyramine + O2 + H2O = (4-hydroxyphenyl)acetaldehyde + H2O2 + NH4(+). The catalysed reaction is (R)-noradrenaline + O2 + H2O = (R)-3,4-dihydroxymandelaldehyde + H2O2 + NH4(+). It catalyses the reaction 2-phenylethylamine + O2 + H2O = 2-phenylacetaldehyde + H2O2 + NH4(+). It carries out the reaction N-acetylputrescine + O2 + H2O = 4-acetamidobutanal + H2O2 + NH4(+). Its function is as follows. Catalyzes the oxidative deamination of primary and some secondary amines such as neurotransmitters, and exogenous amines including the tertiary amine, neurotoxin 1-methyl-4-phenyl-1,2,3,6-tetrahydropyridine (MPTP), with concomitant reduction of oxygen to hydrogen peroxide and participates in the metabolism of neuroactive and vasoactive amines in the central nervous system and peripheral tissues. Preferentially degrades benzylamine and phenylethylamine. This Bos taurus (Bovine) protein is Amine oxidase [flavin-containing] B.